A 168-amino-acid chain; its full sequence is ATP synthase subunit b (168 aa).

A helical transmembrane segment spans residues 7–26 (FVLSNFIFTLINLWIMYWVL).

It belongs to the ATPase B chain family. As to quaternary structure, F-type ATPases have 2 components, F(1) - the catalytic core - and F(0) - the membrane proton channel. F(1) has five subunits: alpha(3), beta(3), gamma(1), delta(1), epsilon(1). F(0) has three main subunits: a(1), b(2) and c(10-14). The alpha and beta chains form an alternating ring which encloses part of the gamma chain. F(1) is attached to F(0) by a central stalk formed by the gamma and epsilon chains, while a peripheral stalk is formed by the delta and b chains.

The protein localises to the cell membrane. Functionally, f(1)F(0) ATP synthase produces ATP from ADP in the presence of a proton or sodium gradient. F-type ATPases consist of two structural domains, F(1) containing the extramembraneous catalytic core and F(0) containing the membrane proton channel, linked together by a central stalk and a peripheral stalk. During catalysis, ATP synthesis in the catalytic domain of F(1) is coupled via a rotary mechanism of the central stalk subunits to proton translocation. Component of the F(0) channel, it forms part of the peripheral stalk, linking F(1) to F(0). In Alkaliphilus metalliredigens (strain QYMF), this protein is ATP synthase subunit b.